A 440-amino-acid chain; its full sequence is uncharacterized protein (440 aa).

Disordered regions lie at residues 49 to 81 (CPPAQSHGHSSLRTNLNSSPPRCPQNPGTEPSL) and 162 to 295 (LPKP…CASE). Over residues 55 to 80 (HGHSSLRTNLNSSPPRCPQNPGTEPS) the composition is skewed to polar residues. Positions 249 to 266 (YREELSNTKSRFSEDKGS) are enriched in basic and acidic residues. Over residues 274–284 (SSNSSEPGLPG) the composition is skewed to low complexity.

It belongs to the tymoviridae protein p69 family.

This is an uncharacterized protein from Erysimum latent virus (ELV).